The primary structure comprises 123 residues: Large ribosomal subunit protein uL18 (123 aa).

Belongs to the universal ribosomal protein uL18 family. Part of the 50S ribosomal subunit; part of the 5S rRNA/L5/L18/L25 subcomplex. Contacts the 5S and 23S rRNAs.

In terms of biological role, this is one of the proteins that bind and probably mediate the attachment of the 5S RNA into the large ribosomal subunit, where it forms part of the central protuberance. The chain is Large ribosomal subunit protein uL18 from Chlamydia felis (strain Fe/C-56) (Chlamydophila felis).